Consider the following 152-residue polypeptide: Protein SprT-like (152 aa).

One can recognise a SprT-like domain in the interval 7 to 147 (QRLVEEVSLQ…CGKCKGKLKP (141 aa)). Position 67 (histidine 67) interacts with Zn(2+). Glutamate 68 is an active-site residue. Histidine 71 lines the Zn(2+) pocket.

This sequence belongs to the SprT family. Requires Zn(2+) as cofactor.

It localises to the cytoplasm. The chain is Protein SprT-like from Bacillus cereus (strain G9842).